The following is a 422-amino-acid chain: Oxysterol-binding protein 7 (422 aa).

The tract at residues 283-313 (EAAPASSASKKEKKKEKKKAKHSKHTCSPSD) is disordered. The span at 293–307 (KEKKKEKKKAKHSKH) shows a compositional bias: basic residues. Residues 354–384 (MQAADQIKKEIEDEQRKRLQITKEEEKKERA) are a coiled coil. Residues 402–422 (TLAPVSNSTSSTASDAASGSN) form a disordered region. Residues 407-422 (SNSTSSTASDAASGSN) are compositionally biased toward low complexity.

Belongs to the OSBP family.

This chain is Oxysterol-binding protein 7 (osbG), found in Dictyostelium discoideum (Social amoeba).